Reading from the N-terminus, the 55-residue chain is uncharacterized protein (55 aa).

This is an uncharacterized protein from Saccharomyces cerevisiae (strain ATCC 204508 / S288c) (Baker's yeast).